A 451-amino-acid chain; its full sequence is Probable gamma-glutamyl phosphate reductase (451 aa).

Belongs to the gamma-glutamyl phosphate reductase family.

The enzyme catalyses L-glutamate 5-semialdehyde + phosphate + NADP(+) = L-glutamyl 5-phosphate + NADPH + H(+). Its pathway is amino-acid biosynthesis; L-proline biosynthesis; L-glutamate 5-semialdehyde from L-glutamate: step 2/2. Its function is as follows. Catalyzes the NADPH dependent reduction of L-gamma-glutamyl 5-phosphate into L-glutamate 5-semialdehyde and phosphate. The product spontaneously undergoes cyclization to form 1-pyrroline-5-carboxylate. This Schizosaccharomyces pombe (strain 972 / ATCC 24843) (Fission yeast) protein is Probable gamma-glutamyl phosphate reductase (pro1).